Consider the following 217-residue polypeptide: Ras-related protein RABA1g (217 aa).

20–27 (GDSGVGKS) is a GTP binding site. The Effector region signature appears at 42–50 (SKSTIGVEF). GTP contacts are provided by residues 68 to 72 (DTAGQ), 126 to 129 (NKAD), and 156 to 157 (SA). Residues Cys214 and Cys215 are each lipidated (S-geranylgeranyl cysteine).

The protein belongs to the small GTPase superfamily. Rab family.

The protein localises to the cell membrane. Its function is as follows. Intracellular vesicle trafficking and protein transport. The protein is Ras-related protein RABA1g (RABA1G) of Arabidopsis thaliana (Mouse-ear cress).